We begin with the raw amino-acid sequence, 302 residues long: 4-hydroxy-tetrahydrodipicolinate synthase (302 aa).

Pyruvate is bound at residue threonine 55. Catalysis depends on tyrosine 144, which acts as the Proton donor/acceptor. Lysine 172 functions as the Schiff-base intermediate with substrate in the catalytic mechanism. Residue valine 214 participates in pyruvate binding.

Belongs to the DapA family. As to quaternary structure, homotetramer; dimer of dimers.

The protein localises to the cytoplasm. The catalysed reaction is L-aspartate 4-semialdehyde + pyruvate = (2S,4S)-4-hydroxy-2,3,4,5-tetrahydrodipicolinate + H2O + H(+). Its pathway is amino-acid biosynthesis; L-lysine biosynthesis via DAP pathway; (S)-tetrahydrodipicolinate from L-aspartate: step 3/4. Its function is as follows. Catalyzes the condensation of (S)-aspartate-beta-semialdehyde [(S)-ASA] and pyruvate to 4-hydroxy-tetrahydrodipicolinate (HTPA). The protein is 4-hydroxy-tetrahydrodipicolinate synthase of Prochlorococcus marinus (strain MIT 9211).